The sequence spans 233 residues: MFRIVKWLIALPVGIFIFFNAYVYGNIITYRAVAPHRTAFMSMRMKQFEQEGRDVALDYRWVPYNRISVNLKKALIASEDARFAGHGGFDWGGIQNAIRRNRNSGKVKAGGSTISQQLAKNLFLNESRSYIRKGEEAAITAMMEAVTDKDRIFELYLNSIEWHYGVFGAEAASRYFYQIPAAKLSKQQAAKLTARVPAPLYYADHPKSKRLRNKTNIVLRRMGSAELPESDTD.

Residues 8–28 traverse the membrane as a helical segment; sequence LIALPVGIFIFFNAYVYGNII.

This sequence belongs to the glycosyltransferase 51 family.

It is found in the cell inner membrane. It catalyses the reaction [GlcNAc-(1-&gt;4)-Mur2Ac(oyl-L-Ala-gamma-D-Glu-L-Lys-D-Ala-D-Ala)](n)-di-trans,octa-cis-undecaprenyl diphosphate + beta-D-GlcNAc-(1-&gt;4)-Mur2Ac(oyl-L-Ala-gamma-D-Glu-L-Lys-D-Ala-D-Ala)-di-trans,octa-cis-undecaprenyl diphosphate = [GlcNAc-(1-&gt;4)-Mur2Ac(oyl-L-Ala-gamma-D-Glu-L-Lys-D-Ala-D-Ala)](n+1)-di-trans,octa-cis-undecaprenyl diphosphate + di-trans,octa-cis-undecaprenyl diphosphate + H(+). The protein operates within cell wall biogenesis; peptidoglycan biosynthesis. In terms of biological role, peptidoglycan polymerase that catalyzes glycan chain elongation from lipid-linked precursors. The polypeptide is Biosynthetic peptidoglycan transglycosylase (Neisseria meningitidis serogroup C (strain 053442)).